We begin with the raw amino-acid sequence, 199 residues long: Probable V-type proton ATPase 20 kDa proteolipid subunit (199 aa).

Topologically, residues 1 to 3 (MSL) are vacuolar. Residues 4–24 (FSTSLWTTTVMSIIVGLYMLF) form a helical membrane-spanning segment. Topologically, residues 25–46 (HNSGESFDFGSFLLDTSPYTWG) are cytoplasmic. A helical transmembrane segment spans residues 47–67 (LLGIASCVAFGIIGAAWGIFI). The Vacuolar segment spans residues 68-86 (CGTSILGGAVKAPRIKTKN). A helical transmembrane segment spans residues 87–107 (LISIIFCEVVAIYSLIIAIVF). At 108–130 (SAKINDINPAGFYTKSHYYTGFA) the chain is on the cytoplasmic side. Residues 131–151 (LFWGGITVGLCNLICGVCVGI) form a helical membrane-spanning segment. Residues 152–170 (TGSSAALADAQDASLFVKV) are Vacuolar-facing. A helical membrane pass occupies residues 171–191 (LVVEIFGSVLGLFGLIVGLLI). The Cytoplasmic segment spans residues 192–199 (GGKASDFS).

The protein belongs to the V-ATPase proteolipid subunit family. In terms of assembly, V-ATPase is a heteromultimeric enzyme composed of a peripheral catalytic V1 complex (components A to H) attached to an integral membrane V0 proton pore complex (components: a, c, c', c'', d, e, f and VOA1). The decameric c-ring forms the proton-conducting pore, and is composed of eight proteolipid subunits c, one subunit c' and one subunit c''.

It is found in the vacuole membrane. Proton-conducting pore forming subunit of the V0 complex of vacuolar(H+)-ATPase (V-ATPase), a multisubunit enzyme composed of a peripheral complex (V1) that hydrolyzes ATP and a membrane integral complex (V0) that translocates protons. V-ATPase is responsible for acidifying and maintaining the pH of intracellular compartments. The polypeptide is Probable V-type proton ATPase 20 kDa proteolipid subunit (vma16) (Schizosaccharomyces pombe (strain 972 / ATCC 24843) (Fission yeast)).